Reading from the N-terminus, the 141-residue chain is Putative pre-16S rRNA nuclease (141 aa).

It belongs to the YqgF nuclease family.

The protein resides in the cytoplasm. Could be a nuclease involved in processing of the 5'-end of pre-16S rRNA. This is Putative pre-16S rRNA nuclease from Amoebophilus asiaticus (strain 5a2).